Consider the following 44-residue polypeptide: DNA-directed RNA polymerase subunit Rpo12 (44 aa).

Cys-8, Cys-22, and Cys-25 together coordinate Zn(2+).

It belongs to the archaeal Rpo12/eukaryotic RPC10 RNA polymerase subunit family. Part of the RNA polymerase complex. Zn(2+) is required as a cofactor.

It localises to the cytoplasm. The catalysed reaction is RNA(n) + a ribonucleoside 5'-triphosphate = RNA(n+1) + diphosphate. In terms of biological role, DNA-dependent RNA polymerase (RNAP) catalyzes the transcription of DNA into RNA using the four ribonucleoside triphosphates as substrates. This is DNA-directed RNA polymerase subunit Rpo12 from Natronomonas pharaonis (strain ATCC 35678 / DSM 2160 / CIP 103997 / JCM 8858 / NBRC 14720 / NCIMB 2260 / Gabara) (Halobacterium pharaonis).